Reading from the N-terminus, the 386-residue chain is Protein lin-8 (386 aa).

The tract at residues 175–285 (LGLEARRASK…FSQQYGGGGS (111 aa)) is sufficient for interaction with lin-35. Residues 212–240 (EEPYEETGSNWSDPAPEPSQSKSQSPEAK) form a disordered region. Low complexity predominate over residues 229 to 240 (PSQSKSQSPEAK).

This sequence belongs to the lin-8 family. Interacts with lin-35 (via C-terminus). As to expression, widely expressed throughout development, with particularly prominent expression in the germline and in neuronal nuclei of the head (at protein level).

The protein localises to the nucleus. Acts as a synthetic multivulva class A (synMuvA) protein and redundantly inhibits lin-3/EGF expression to prevent inappropriate vulva induction. The sequence is that of Protein lin-8 from Caenorhabditis elegans.